The following is a 281-amino-acid chain: Probable endonuclease 4 (281 aa).

Zn(2+) contacts are provided by His-69, His-109, Glu-145, Asp-179, His-182, His-216, Asp-229, His-231, and Glu-261.

This sequence belongs to the AP endonuclease 2 family. The cofactor is Zn(2+).

The enzyme catalyses Endonucleolytic cleavage to 5'-phosphooligonucleotide end-products.. Endonuclease IV plays a role in DNA repair. It cleaves phosphodiester bonds at apurinic or apyrimidinic (AP) sites, generating a 3'-hydroxyl group and a 5'-terminal sugar phosphate. The polypeptide is Probable endonuclease 4 (Chlorobaculum parvum (strain DSM 263 / NCIMB 8327) (Chlorobium vibrioforme subsp. thiosulfatophilum)).